Consider the following 573-residue polypeptide: Putative adenine deaminase PTO1085 (573 aa).

Belongs to the metallo-dependent hydrolases superfamily. Adenine deaminase family.

It catalyses the reaction adenine + H2O + H(+) = hypoxanthine + NH4(+). This Picrophilus torridus (strain ATCC 700027 / DSM 9790 / JCM 10055 / NBRC 100828 / KAW 2/3) protein is Putative adenine deaminase PTO1085.